The chain runs to 559 residues: Small ribosomal subunit protein bS1 (559 aa).

S1 motif domains are found at residues 21-87, 105-171, 192-260, 277-347, 364-434, and 451-520; these read GSII…LSRE, SETV…VSRR, GIEI…LGLK, GIKL…LGLK, GIHV…LGIK, and GAII…LTFH.

It belongs to the bacterial ribosomal protein bS1 family.

Its function is as follows. Binds mRNA; thus facilitating recognition of the initiation point. It is needed to translate mRNA with a short Shine-Dalgarno (SD) purine-rich sequence. The protein is Small ribosomal subunit protein bS1 (rpsA) of Buchnera aphidicola subsp. Schizaphis graminum (strain Sg).